Consider the following 170-residue polypeptide: Macro domain-containing protein VPA0103 (170 aa).

Positions 1–170 (MNAISLVQGD…SIWQHALTQH (170 aa)) constitute a Macro domain.

Belongs to the MacroD-type family.

The chain is Macro domain-containing protein VPA0103 from Vibrio parahaemolyticus serotype O3:K6 (strain RIMD 2210633).